A 105-amino-acid chain; its full sequence is uncharacterized protein (105 aa).

The segment covering 1–11 (MPHRNDRRKSA) has biased composition (basic residues). The interval 1–20 (MPHRNDRRKSASKAPNAIIH) is disordered.

The protein belongs to the ALB1 family.

The protein resides in the nucleus. It localises to the nucleolus. This is an uncharacterized protein from Schizosaccharomyces pombe (strain 972 / ATCC 24843) (Fission yeast).